A 288-amino-acid chain; its full sequence is 4-diphosphocytidyl-2-C-methyl-D-erythritol kinase (288 aa).

Residue Lys-8 is part of the active site. 90-100 (PLEAGLAGGSA) contacts ATP. Residue Asp-132 is part of the active site.

Belongs to the GHMP kinase family. IspE subfamily.

It carries out the reaction 4-CDP-2-C-methyl-D-erythritol + ATP = 4-CDP-2-C-methyl-D-erythritol 2-phosphate + ADP + H(+). Its pathway is isoprenoid biosynthesis; isopentenyl diphosphate biosynthesis via DXP pathway; isopentenyl diphosphate from 1-deoxy-D-xylulose 5-phosphate: step 3/6. Functionally, catalyzes the phosphorylation of the position 2 hydroxy group of 4-diphosphocytidyl-2C-methyl-D-erythritol. In Carboxydothermus hydrogenoformans (strain ATCC BAA-161 / DSM 6008 / Z-2901), this protein is 4-diphosphocytidyl-2-C-methyl-D-erythritol kinase.